Reading from the N-terminus, the 301-residue chain is Pantothenate synthetase (301 aa).

30–37 (MGNLHEGH) is an ATP binding site. H37 functions as the Proton donor in the catalytic mechanism. Q61 lines the (R)-pantoate pocket. A beta-alanine-binding site is contributed by Q61. 149–152 (GEKD) contacts ATP. A (R)-pantoate-binding site is contributed by Q155. ATP contacts are provided by residues V178 and 186–189 (MSSR).

The protein belongs to the pantothenate synthetase family. As to quaternary structure, homodimer.

The protein localises to the cytoplasm. The catalysed reaction is (R)-pantoate + beta-alanine + ATP = (R)-pantothenate + AMP + diphosphate + H(+). It functions in the pathway cofactor biosynthesis; (R)-pantothenate biosynthesis; (R)-pantothenate from (R)-pantoate and beta-alanine: step 1/1. Functionally, catalyzes the condensation of pantoate with beta-alanine in an ATP-dependent reaction via a pantoyl-adenylate intermediate. In Vibrio parahaemolyticus serotype O3:K6 (strain RIMD 2210633), this protein is Pantothenate synthetase.